The following is a 152-amino-acid chain: Ribosomal RNA large subunit methyltransferase H (152 aa).

Residues Leu69, Gly96, and 118 to 123 (FGKLTF) each bind S-adenosyl-L-methionine.

Belongs to the RNA methyltransferase RlmH family. Homodimer.

It is found in the cytoplasm. It catalyses the reaction pseudouridine(1915) in 23S rRNA + S-adenosyl-L-methionine = N(3)-methylpseudouridine(1915) in 23S rRNA + S-adenosyl-L-homocysteine + H(+). Specifically methylates the pseudouridine at position 1915 (m3Psi1915) in 23S rRNA. The polypeptide is Ribosomal RNA large subunit methyltransferase H (Mesomycoplasma hyopneumoniae (strain 232) (Mycoplasma hyopneumoniae)).